A 505-amino-acid polypeptide reads, in one-letter code: Catalase (505 aa).

Residues 1–25 form a disordered region; sequence MSQQDKKLTGVFGHPVSDRENSMTA. Residues H56 and N129 contribute to the active site. Y339 is a heme binding site.

The protein belongs to the catalase family. As to quaternary structure, homodimer. Heme is required as a cofactor.

The catalysed reaction is 2 H2O2 = O2 + 2 H2O. Functionally, decomposes hydrogen peroxide into water and oxygen; serves to protect cells from the toxic effects of hydrogen peroxide. This chain is Catalase (katA), found in Staphylococcus aureus (strain MSSA476).